The primary structure comprises 459 residues: MALWGGRFSQKADQRFKQFNDSLRFDYRLAEQDITGSVAWSKALITVGVLTVEEQQRLELALNELLNEVQANPQAILQSDAEDIHSWVEGQLISKVGGLGKKLHTGRSRNDQVATDLKLWCKEYISHLHQAIVELQQVLVITAEKNQDTVMPGYTHLQRAQPITFAHWCLAYVEMLVRDENRLQDTLKRLNTSPLGCGALAGTAYDIDREQLASWLGFASATRNSLDSVSDRDHVLELLSNASISMIHLSRFAEDLIFFNSGEAGFIELSDRVTSGSSLMPQKKNPDALELIRGKCGRVQGALTGMMMTLKGLPLAYNKDMQEDKEGLFDALDIWLDCLHMAALVLDGIQVRRSRCAEAAKQGYANATELADYLVAKGVPFREAHHIVGEIVMMALTQGKALEALPLTELQKFSSAIIEDVYDILSLQSCLDKRLAKGGVSPKQVMKAIVEAKQRLKLS.

This sequence belongs to the lyase 1 family. Argininosuccinate lyase subfamily.

It localises to the cytoplasm. The enzyme catalyses 2-(N(omega)-L-arginino)succinate = fumarate + L-arginine. The protein operates within amino-acid biosynthesis; L-arginine biosynthesis; L-arginine from L-ornithine and carbamoyl phosphate: step 3/3. This is Argininosuccinate lyase from Photorhabdus laumondii subsp. laumondii (strain DSM 15139 / CIP 105565 / TT01) (Photorhabdus luminescens subsp. laumondii).